Reading from the N-terminus, the 509-residue chain is Putative ATP-dependent RNA helicase QP509L (509 aa).

A Helicase ATP-binding domain is found at 110 to 262 (KKLLSPYGRF…KIILHHLGQP (153 aa)). 123-130 (LNTGLGKT) is an ATP binding site. Residues 215 to 218 (DEAH) carry the DEAH box motif.

It belongs to the DEAD box helicase family. DEAH subfamily.

It catalyses the reaction ATP + H2O = ADP + phosphate + H(+). This is Putative ATP-dependent RNA helicase QP509L from Ornithodoros (relapsing fever ticks).